Reading from the N-terminus, the 853-residue chain is DNA topoisomerase 1 (853 aa).

In terms of domain architecture, Toprim spans 3–136 (KSLVIVESPV…KFRRVVFNEI (134 aa)). Glu-9 and Asp-105 together coordinate Mg(2+). A Topo IA-type catalytic domain is found at 152 to 565 (NMNRVYSQQA…SFFDNFSQQL (414 aa)). The interval 186–191 (SAGRVQ) is interaction with DNA. The O-(5'-phospho-DNA)-tyrosine intermediate role is filled by Tyr-313. C4-type zinc fingers lie at residues 589–621 (CSLCNKKMGIKTAVTGVFLSCLGYNSEPNEKRC), 649–676 (CKKCNLVMDVYLINENLKIFICINNPSC), and 699–724 (CEKCKNDMLFKTGRFGNFFMCINDTC).

Belongs to the type IA topoisomerase family. Monomer. Requires Mg(2+) as cofactor.

The catalysed reaction is ATP-independent breakage of single-stranded DNA, followed by passage and rejoining.. Releases the supercoiling and torsional tension of DNA, which is introduced during the DNA replication and transcription, by transiently cleaving and rejoining one strand of the DNA duplex. Introduces a single-strand break via transesterification at a target site in duplex DNA. The scissile phosphodiester is attacked by the catalytic tyrosine of the enzyme, resulting in the formation of a DNA-(5'-phosphotyrosyl)-enzyme intermediate and the expulsion of a 3'-OH DNA strand. The free DNA strand then undergoes passage around the unbroken strand, thus removing DNA supercoils. Finally, in the religation step, the DNA 3'-OH attacks the covalent intermediate to expel the active-site tyrosine and restore the DNA phosphodiester backbone. This is DNA topoisomerase 1 from Buchnera aphidicola subsp. Schizaphis graminum (strain Sg).